The following is a 323-amino-acid chain: Aldo-keto reductase family 1 member C23-like protein (323 aa).

Gly20–Tyr24 lines the NADP(+) pocket. Residue Lys31 coordinates substrate. NADP(+) is bound at residue Asp50. Catalysis depends on Tyr55, which acts as the Proton donor. His117 lines the substrate pocket. Residues Ser166–Asn167, Gln190, Tyr216–Gln222, and Lys270–Asn280 each bind NADP(+).

It belongs to the aldo/keto reductase family. Monomer. Detected in endometrium surface epithelium (at protein level). Detected in endometrium.

The protein localises to the cytoplasm. NADP-dependent oxidoreductase involved in steroid metabolism. May act on various hydroxysteroids. This is Aldo-keto reductase family 1 member C23-like protein (PGFS) from Equus caballus (Horse).